Here is a 142-residue protein sequence, read N- to C-terminus: Large ribosomal subunit protein uL11 (142 aa).

The protein belongs to the universal ribosomal protein uL11 family. As to quaternary structure, part of the ribosomal stalk of the 50S ribosomal subunit. Interacts with L10 and the large rRNA to form the base of the stalk. L10 forms an elongated spine to which L12 dimers bind in a sequential fashion forming a multimeric L10(L12)X complex. In terms of processing, one or more lysine residues are methylated.

Functionally, forms part of the ribosomal stalk which helps the ribosome interact with GTP-bound translation factors. The polypeptide is Large ribosomal subunit protein uL11 (Shewanella oneidensis (strain ATCC 700550 / JCM 31522 / CIP 106686 / LMG 19005 / NCIMB 14063 / MR-1)).